A 454-amino-acid chain; its full sequence is UDP-N-acetylmuramate--L-alanine ligase (454 aa).

112–118 (GTHGKTT) provides a ligand contact to ATP.

Belongs to the MurCDEF family.

The protein localises to the cytoplasm. The enzyme catalyses UDP-N-acetyl-alpha-D-muramate + L-alanine + ATP = UDP-N-acetyl-alpha-D-muramoyl-L-alanine + ADP + phosphate + H(+). The protein operates within cell wall biogenesis; peptidoglycan biosynthesis. Functionally, cell wall formation. This chain is UDP-N-acetylmuramate--L-alanine ligase, found in Oleidesulfovibrio alaskensis (strain ATCC BAA-1058 / DSM 17464 / G20) (Desulfovibrio alaskensis).